The following is an 86-amino-acid chain: Large ribosomal subunit protein bL27 (86 aa).

The interval 1–26 (MATKKAGGSSRNGRDSAGRRLGVKKS) is disordered.

The protein belongs to the bacterial ribosomal protein bL27 family.

This chain is Large ribosomal subunit protein bL27, found in Rickettsia prowazekii (strain Madrid E).